The sequence spans 138 residues: Nucleoside diphosphate kinase (138 aa).

Lys-10, Phe-58, Arg-86, Thr-92, Arg-103, and Asn-113 together coordinate ATP. His-116 functions as the Pros-phosphohistidine intermediate in the catalytic mechanism.

This sequence belongs to the NDK family. As to quaternary structure, homotetramer. Requires Mg(2+) as cofactor.

The protein localises to the cytoplasm. The catalysed reaction is a 2'-deoxyribonucleoside 5'-diphosphate + ATP = a 2'-deoxyribonucleoside 5'-triphosphate + ADP. The enzyme catalyses a ribonucleoside 5'-diphosphate + ATP = a ribonucleoside 5'-triphosphate + ADP. Functionally, major role in the synthesis of nucleoside triphosphates other than ATP. The ATP gamma phosphate is transferred to the NDP beta phosphate via a ping-pong mechanism, using a phosphorylated active-site intermediate. The chain is Nucleoside diphosphate kinase from Actinobacillus pleuropneumoniae serotype 7 (strain AP76).